We begin with the raw amino-acid sequence, 840 residues long: MDESALLDLLECPVCLERLDASAKVLPCQHTFCKRCLLGIVGSRNELRCPECRTLVGSGVEQLPSNILLVRLLDGIKQRPWKPGPVGGSGTNGTSALRAQSSAVVTCSPKDGPSSQGGPQPRAQAWSPPVRGIPQLPCAKALYNYEGKEPGDLKFSKGDIIVLRRQVDENWYHGEVGGVHGFFPTNFVQIIKPLPQPPPQCKALYDFEVKDKEADKDCLPFAKDDVLTVIRRVDENWAEGMLADKIGIFPISYVEFNSAAKQLIEWDQPPGPGVAAGEGALATTPSSTTTKQPDGKKNTKKRHSFTSLSMASKASQAAQQRHSMEISPPVLISSSNPAAAARIGELAGLSCSAPSQVHISTTGLIVTPPPSSPVTTGPSFTFPAEAPYPAALATLNPPLPPPPLQAATPTGTAVAAAAGMGPRPTAGPTDQTTHPRPQPRPSVYVAIYPYTPRKEDELELRKGEMFLVFERCQDGWFKGTSMHTSKIGVFPGNYVAPVTRAVTSASQGKVPMLTTGPASRGGVLANPPSTGGPAQKPPGNGVAGGPGVPTAVVSAAHVQTSPQAKVLLHASGQMTVNQARSAARTVSAHSQERPTAAVTPIQVQSTPGQSHHPLVSPQPPAPLGPPAHAAASGLGRVGGPLACATAPASIPAASLEPEPSSRPATLLPGTPTSPDSGSAARPDKDGKKEKKGLLKLLSGASTKRKPRGSPPASPTLDAELGAELSCGPPGPPCACPGPCDGDTMAPGPQRRASSLDSAPVAPPPRQPCSSLGPAASEVRPAVCERHRVVVSYPPQSEAELELKEGDIVFVHKKREDGWFKGTLQRNGKTGLFPGSFVENI.

The RING-type zinc-finger motif lies at 12 to 53 (CPVCLERLDASAKVLPCQHTFCKRCLLGIVGSRNELRCPECR). Residues 105–129 (VTCSPKDGPSSQGGPQPRAQAWSPP) are disordered. SH3 domains lie at 134–193 (PQLP…IIKP) and 196–259 (QPPP…FNSA). Disordered stretches follow at residues 267–324 (DQPP…RHSM), 394–442 (TLNP…PRPS), 516–545 (GPASRGGVLANPPSTGGPAQKPPGNGVAGG), 578–633 (QARS…AASG), 652–723 (AASL…LGAE), and 744–773 (MAPGPQRRASSLDSAPVAPPPRQPCSSLGP). The span at 273–282 (GVAAGEGALA) shows a compositional bias: low complexity. A compositionally biased stretch (polar residues) spans 283-292 (TTPSSTTTKQ). An interaction with RAC1 region spans residues 292-362 (QPDGKKNTKK…APSQVHISTT (71 aa)). The residue at position 304 (serine 304) is a Phosphoserine. Composition is skewed to low complexity over residues 307-320 (SLSMASKASQAAQQ) and 405-424 (QAATPTGTAVAAAAGMGPRP). The segment at 434-537 (HPRPQPRPSV…PSTGGPAQKP (104 aa)) is interaction with AKT2. The SH3 3 domain occupies 439 to 500 (PRPSVYVAIY…PGNYVAPVTR (62 aa)). Residues 616 to 625 (SPQPPAPLGP) are compositionally biased toward pro residues. Residues 681 to 692 (RPDKDGKKEKKG) are compositionally biased toward basic and acidic residues. Serine 709 carries the phosphoserine modification. An SH3 4 domain is found at 781–840 (AVCERHRVVVSYPPQSEAELELKEGDIVFVHKKREDGWFKGTLQRNGKTGLFPGSFVENI).

This sequence belongs to the SH3RF family. In terms of assembly, interacts with RAC1; in a GTP-dependent manner. Interacts with MAP3K10/MLK2 and MAP3K11/MLK3. Interacts with MAPK8IP; this interaction leads to the PJAC complex (POSH-JIP or SH3RF1/MAPK8IP apoptotic complex) with a 1:1 ratio. Interacts with SIAH1. Interacts with HERP1. Probably part of a signaling complex that may contain SH3RF1, MAPK8IP, DLK1, MAP2K4/MKK4, MAP2K7/MKK7, MAPK8/JNK1, MAPK9/JNK2, AKT1 and AKT2. Found in a complex with RAC2, MAP3K7/TAK1, MAP2K7/MKK7, MAPK8IP1/JIP1, MAPK8/JNK1 and MAPK9/JNK2. Found in a complex with RAC1, MAP3K11/MLK3, MAP2K7/MKK7, MAPK8IP1/JIP1 and MAPK8/JNK1. Interacts with SH3RF2. In terms of processing, phosphorylated at Ser-304 by AKT1 and AKT2. When phosphorylated, it has reduced ability to bind Rac. Autoubiquitinated. Ubiquitinated by SH3RF2, leading to proteasome-mediated degradation.

The protein resides in the cytoplasm. The protein localises to the perinuclear region. It localises to the cell projection. It is found in the lamellipodium. Its subcellular location is the golgi apparatus. The protein resides in the trans-Golgi network. The enzyme catalyses S-ubiquitinyl-[E2 ubiquitin-conjugating enzyme]-L-cysteine + [acceptor protein]-L-lysine = [E2 ubiquitin-conjugating enzyme]-L-cysteine + N(6)-ubiquitinyl-[acceptor protein]-L-lysine.. Its pathway is protein modification; protein ubiquitination. Has E3 ubiquitin-protein ligase activity. In the absence of an external substrate, it can catalyze self-ubiquitination. Stimulates ubiquitination of potassium channel KCNJ1, enhancing it's dynamin-dependent and clathrin-independent endocytosis. Acts as a scaffold protein that coordinates with MAPK8IP1/JIP1 in organizing different components of the JNK pathway, including RAC1 or RAC2, MAP3K11/MLK3 or MAP3K7/TAK1, MAP2K7/MKK7, MAPK8/JNK1 and/or MAPK9/JNK2 into a functional multiprotein complex to ensure the effective activation of the JNK signaling pathway. Regulates the differentiation of CD4(+) and CD8(+) T-cells and promotes T-helper 1 (Th1) cell differentiation. Regulates the activation of MAPK8/JNK1 and MAPK9/JNK2 in CD4(+) T-cells and the activation of MAPK8/JNK1 in CD8(+) T-cells. Plays a crucial role in the migration of neocortical neurons in the developing brain. Controls proper cortical neuronal migration and the formation of proximal cytoplasmic dilation in the leading process (PCDLP) in migratory neocortical neurons by regulating the proper localization of activated RAC1 and F-actin assembly. The protein is E3 ubiquitin-protein ligase SH3RF1 (SH3RF1) of Bos taurus (Bovine).